The following is a 401-amino-acid chain: 8-amino-7-oxononanoate synthase (401 aa).

Arg19 is a binding site for substrate. 106-107 provides a ligand contact to pyridoxal 5'-phosphate; sequence GY. His131 is a substrate binding site. Pyridoxal 5'-phosphate-binding residues include Ser176, His204, and Thr233. An N6-(pyridoxal phosphate)lysine modification is found at Lys236. Residue Thr350 coordinates substrate.

This sequence belongs to the class-II pyridoxal-phosphate-dependent aminotransferase family. BioF subfamily. Homodimer. Requires pyridoxal 5'-phosphate as cofactor.

The catalysed reaction is 6-carboxyhexanoyl-[ACP] + L-alanine + H(+) = (8S)-8-amino-7-oxononanoate + holo-[ACP] + CO2. Its pathway is cofactor biosynthesis; biotin biosynthesis. Its function is as follows. Catalyzes the decarboxylative condensation of pimeloyl-[acyl-carrier protein] and L-alanine to produce 8-amino-7-oxononanoate (AON), [acyl-carrier protein], and carbon dioxide. This is 8-amino-7-oxononanoate synthase from Pseudomonas aeruginosa (strain ATCC 15692 / DSM 22644 / CIP 104116 / JCM 14847 / LMG 12228 / 1C / PRS 101 / PAO1).